Reading from the N-terminus, the 831-residue chain is Leucine--tRNA ligase (831 aa).

The 'HIGH' region motif lies at 35–45 (PYPSGKIHVGH). The 'KMSKS' region motif lies at 600-604 (KMSKS). ATP is bound at residue lysine 603.

It belongs to the class-I aminoacyl-tRNA synthetase family.

The protein resides in the cytoplasm. It carries out the reaction tRNA(Leu) + L-leucine + ATP = L-leucyl-tRNA(Leu) + AMP + diphosphate. The polypeptide is Leucine--tRNA ligase (Rickettsia bellii (strain RML369-C)).